The chain runs to 362 residues: GDSL esterase/lipase At5g22810 (362 aa).

The N-terminal stretch at 1-28 is a signal peptide; it reads MGFSGIWLNLYVVFGSLMVFERMVVMVV. The Nucleophile role is filled by serine 44. Residues asparagine 159, asparagine 162, asparagine 264, and asparagine 329 are each glycosylated (N-linked (GlcNAc...) asparagine). Active-site residues include aspartate 337 and histidine 340.

This sequence belongs to the 'GDSL' lipolytic enzyme family.

Its subcellular location is the secreted. This is GDSL esterase/lipase At5g22810 from Arabidopsis thaliana (Mouse-ear cress).